We begin with the raw amino-acid sequence, 105 residues long: Cell division protein FtsL (105 aa).

Over 1 to 24 (MAEKMEKTGQILQMQLKRFSRVEK) the chain is Cytoplasmic. The chain crosses the membrane as a helical span at residues 25–45 (AFYFSIAVTTLIVAISIIFMQ). Residues 46–105 (TKLLQVQNDLTKINAQIEEKKTELDDAKQEVNELLRAERLKEIANSHDLQLNNENIRIAE) are Extracellular-facing.

The protein belongs to the FtsL family.

The protein resides in the cell membrane. Its function is as follows. Essential cell division protein. In Streptococcus pneumoniae (strain ATCC BAA-255 / R6), this protein is Cell division protein FtsL.